The following is a 129-amino-acid chain: Large ribosomal subunit protein bL20 (129 aa).

It belongs to the bacterial ribosomal protein bL20 family.

Its function is as follows. Binds directly to 23S ribosomal RNA and is necessary for the in vitro assembly process of the 50S ribosomal subunit. It is not involved in the protein synthesizing functions of that subunit. The polypeptide is Large ribosomal subunit protein bL20 (Mycobacterium marinum (strain ATCC BAA-535 / M)).